The following is a 483-amino-acid chain: Probable zinc metalloprotease PTT_08196 (483 aa).

The signal sequence occupies residues 1 to 18 (MLFRSVILSNALLLPACA). Asparagine 96 and asparagine 121 each carry an N-linked (GlcNAc...) asparagine glycan. Residues histidine 167, aspartate 187, and glutamate 220 each coordinate Zn(2+). Asparagine 235 is a glycosylation site (N-linked (GlcNAc...) asparagine). Aspartate 247 lines the Zn(2+) pocket. N-linked (GlcNAc...) asparagine glycosylation is found at asparagine 310, asparagine 362, asparagine 401, asparagine 411, and asparagine 421. In terms of domain architecture, Fibronectin type-III spans 396–483 (PAMPRNVTID…KSPAVYPFPA (88 aa)).

The protein belongs to the peptidase M28 family. M28B subfamily. It depends on Zn(2+) as a cofactor.

The protein resides in the secreted. The protein is Probable zinc metalloprotease PTT_08196 of Pyrenophora teres f. teres (strain 0-1) (Barley net blotch fungus).